Here is a 426-residue protein sequence, read N- to C-terminus: Adenylosuccinate synthetase (426 aa).

Residues 12-18 (GDEGKGK) and 40-42 (GHT) each bind GTP. The active-site Proton acceptor is the Asp-13. Residues Asp-13 and Gly-40 each contribute to the Mg(2+) site. IMP-binding positions include 13 to 16 (DEGK), 38 to 41 (NAGH), Thr-128, Arg-142, Gln-223, Thr-238, and Arg-302. His-41 (proton donor) is an active-site residue. 298 to 304 (TTTGRAR) contributes to the substrate binding site. GTP contacts are provided by residues Arg-304, 330–332 (KLD), and 412–414 (SVG).

Belongs to the adenylosuccinate synthetase family. In terms of assembly, homodimer. Requires Mg(2+) as cofactor.

It is found in the cytoplasm. The enzyme catalyses IMP + L-aspartate + GTP = N(6)-(1,2-dicarboxyethyl)-AMP + GDP + phosphate + 2 H(+). The protein operates within purine metabolism; AMP biosynthesis via de novo pathway; AMP from IMP: step 1/2. Plays an important role in the de novo pathway of purine nucleotide biosynthesis. Catalyzes the first committed step in the biosynthesis of AMP from IMP. The sequence is that of Adenylosuccinate synthetase from Thermoanaerobacter pseudethanolicus (strain ATCC 33223 / 39E) (Clostridium thermohydrosulfuricum).